A 253-amino-acid polypeptide reads, in one-letter code: Small ribosomal subunit protein uS2 (253 aa).

The interval 226 to 253 (QGADNADVEKELSESVEENSAEEVDDAE) is disordered. Positions 239 to 253 (ESVEENSAEEVDDAE) are enriched in acidic residues.

It belongs to the universal ribosomal protein uS2 family.

This is Small ribosomal subunit protein uS2 from Lactobacillus delbrueckii subsp. bulgaricus (strain ATCC 11842 / DSM 20081 / BCRC 10696 / JCM 1002 / NBRC 13953 / NCIMB 11778 / NCTC 12712 / WDCM 00102 / Lb 14).